Here is a 291-residue protein sequence, read N- to C-terminus: GTPase Era (291 aa).

Residues 2–167 form the Era-type G domain; that stretch reads KSGFVSIIGR…LDEIVKYLDE (166 aa). Residues 10–17 form a G1 region; sequence GRTNAGKS. A GTP-binding site is contributed by 10-17; sequence GRTNAGKS. The segment at 36-40 is G2; the sequence is NATRR. The tract at residues 57–60 is G3; sequence DTPG. Residues 57 to 61 and 116 to 119 each bind GTP; these read DTPGL and NKVD. The segment at 116–119 is G4; the sequence is NKVD. The interval 146–148 is G5; that stretch reads YSS. Residues 186-274 enclose the KH type-2 domain; the sequence is YRDFILESIY…LLKLFVTVKK (89 aa).

It belongs to the TRAFAC class TrmE-Era-EngA-EngB-Septin-like GTPase superfamily. Era GTPase family. In terms of assembly, monomer.

The protein localises to the cytoplasm. Its subcellular location is the cell inner membrane. Its function is as follows. An essential GTPase that binds both GDP and GTP, with rapid nucleotide exchange. Plays a role in 16S rRNA processing and 30S ribosomal subunit biogenesis and possibly also in cell cycle regulation and energy metabolism. The sequence is that of GTPase Era from Campylobacter jejuni (strain RM1221).